The following is a 37-amino-acid chain: Delta-amaurobitoxin-Pl1b (37 aa).

Cystine bridges form between Cys-2/Cys-18, Cys-9/Cys-23, Cys-17/Cys-33, and Cys-25/Cys-31. Ser-37 is modified (serine amide).

Belongs to the neurotoxin 07 (Beta/delta-agtx) family. 02 (aga-3) subfamily. As to expression, expressed by the venom gland.

It is found in the secreted. In terms of biological role, insecticidal toxin. Binds to site 4 of insect voltage-gated sodium channel (Nav) and inhibits channel inactivation. In vivo, it lethal to lepidopteran larvae. Has no adverse affects when intracerebroventricularly injected in mice at a dose of 0.2 ug, but causes reversible paralysis of legs when injected intracerebroventricularly in mice at a dose of 2.0 ug. This chain is Delta-amaurobitoxin-Pl1b, found in Pireneitega luctuosa (Tangled nest spider).